The sequence spans 163 residues: Transcriptional repressor NrdR (163 aa).

A zinc finger lies at 3–34 (CPFCRHDDSRVVDSRTTDDGSSIRRRRQCPNC). One can recognise an ATP-cone domain in the interval 46 to 136 (LSVIKRSGAP…VYQAFDSLAD (91 aa)).

It belongs to the NrdR family. It depends on Zn(2+) as a cofactor.

Negatively regulates transcription of bacterial ribonucleotide reductase nrd genes and operons by binding to NrdR-boxes. The sequence is that of Transcriptional repressor NrdR from Kineococcus radiotolerans (strain ATCC BAA-149 / DSM 14245 / SRS30216).